The chain runs to 257 residues: Gamma-secretase subunit APH-1B (257 aa).

The next 7 helical transmembrane spans lie at 5–25, 32–52, 66–86, 115–135, 160–180, 186–206, and 213–233; these read VFFGCAFIAFGPALALYVFTI, VIFLIAGAFFWLVSLLLSSVF, PVQNYLLIFGVLLSVCIQELF, LLAYVSGLGFGIMSGVFSFVN, AFMTLVVIMLHVFWGVVFFDG, WYTLLTVLLTHLVVSTQTFLS, and LVTAYIIMVLMGIWAFYVAGG.

This sequence belongs to the APH-1 family. In terms of assembly, probable component of the gamma-secretase complex, a complex composed of a presenilin homodimer (PSEN1 or PSEN2), nicastrin (NCSTN), APH1 (APH1A or APH1B) and PEN2. Such minimal complex is sufficient for secretase activity, although other components may exist. Interacts with PSEN1 and PSEN2.

It is found in the membrane. Functionally, probable subunit of the gamma-secretase complex, an endoprotease complex that catalyzes the intramembrane cleavage of integral proteins such as Notch receptors and APP (amyloid-beta precursor protein). It probably represents a stabilizing cofactor for the presenilin homodimer that promotes the formation of a stable complex. Probably present in a minority of gamma-secretase complexes compared to APH1A. The chain is Gamma-secretase subunit APH-1B (Aph1b) from Mus musculus (Mouse).